Reading from the N-terminus, the 201-residue chain is ATP-dependent Clp protease proteolytic subunit 2 (201 aa).

Catalysis depends on Ser-98, which acts as the Nucleophile. Residue His-123 is part of the active site.

Belongs to the peptidase S14 family. In terms of assembly, fourteen ClpP subunits assemble into 2 heptameric rings which stack back to back to give a disk-like structure with a central cavity, resembling the structure of eukaryotic proteasomes.

It localises to the cytoplasm. The enzyme catalyses Hydrolysis of proteins to small peptides in the presence of ATP and magnesium. alpha-casein is the usual test substrate. In the absence of ATP, only oligopeptides shorter than five residues are hydrolyzed (such as succinyl-Leu-Tyr-|-NHMec, and Leu-Tyr-Leu-|-Tyr-Trp, in which cleavage of the -Tyr-|-Leu- and -Tyr-|-Trp bonds also occurs).. Functionally, cleaves peptides in various proteins in a process that requires ATP hydrolysis. Has a chymotrypsin-like activity. Plays a major role in the degradation of misfolded proteins. The protein is ATP-dependent Clp protease proteolytic subunit 2 of Pseudomonas aeruginosa (strain ATCC 15692 / DSM 22644 / CIP 104116 / JCM 14847 / LMG 12228 / 1C / PRS 101 / PAO1).